The following is a 493-amino-acid chain: Ketol-acid reductoisomerase (NADP(+)) (493 aa).

The KARI N-terminal Rossmann domain occupies 15 to 208 (AQLGKCRFMQ…GGDRAGVLES (194 aa)). NADP(+)-binding positions include 45–48 (CGAQ), Arg-68, Arg-76, Ser-78, and 108–110 (DKQ). The active site involves His-132. Gly-158 is an NADP(+) binding site. KARI C-terminal knotted domains lie at 209–344 (SFVA…NALA) and 345–486 (FAGK…MKDM). Asp-217, Glu-221, Glu-389, and Glu-393 together coordinate Mg(2+). Ser-414 contacts substrate.

The protein belongs to the ketol-acid reductoisomerase family. Mg(2+) is required as a cofactor.

It catalyses the reaction (2R)-2,3-dihydroxy-3-methylbutanoate + NADP(+) = (2S)-2-acetolactate + NADPH + H(+). It carries out the reaction (2R,3R)-2,3-dihydroxy-3-methylpentanoate + NADP(+) = (S)-2-ethyl-2-hydroxy-3-oxobutanoate + NADPH + H(+). The protein operates within amino-acid biosynthesis; L-isoleucine biosynthesis; L-isoleucine from 2-oxobutanoate: step 2/4. Its pathway is amino-acid biosynthesis; L-valine biosynthesis; L-valine from pyruvate: step 2/4. In terms of biological role, involved in the biosynthesis of branched-chain amino acids (BCAA). Catalyzes an alkyl-migration followed by a ketol-acid reduction of (S)-2-acetolactate (S2AL) to yield (R)-2,3-dihydroxy-isovalerate. In the isomerase reaction, S2AL is rearranged via a Mg-dependent methyl migration to produce 3-hydroxy-3-methyl-2-ketobutyrate (HMKB). In the reductase reaction, this 2-ketoacid undergoes a metal-dependent reduction by NADPH to yield (R)-2,3-dihydroxy-isovalerate. The chain is Ketol-acid reductoisomerase (NADP(+)) from Aeromonas salmonicida (strain A449).